A 478-amino-acid polypeptide reads, in one-letter code: Vitronectin (478 aa).

Positions 1 to 19 (MAPLRPLLILALLAWVALA) are cleaved as a signal peptide. The 44-residue stretch at 20–63 (DQESCKGRCTEGFNVDKKCQCDELCSYYQSCCTDYTAECKPQVT) folds into the SMB domain. 7 cysteine pairs are disulfide-bonded: C24-C28, C24-C40, C28-C58, C38-C40, C38-C51, C44-C50, and C51-C58. The Cell attachment site signature appears at 64-66 (RGD). T69 bears the Phosphothreonine; by CK2; in vitro mark. Sulfotyrosine is present on Y75. T76 carries the phosphothreonine; by CK2; in vitro modification. Y78 bears the Sulfotyrosine mark. An N-linked (GlcNAc...) (complex) asparagine glycan is attached at N86. Positions 91 to 158 (EQVGGPSLTS…PPAEEELCSG (68 aa)) are disordered. Polar residues predominate over residues 97 to 112 (SLTSDLQAQSKGNPEQ). S130 and S137 each carry phosphoserine. Positions 133–143 (EGIDSRPETLH) are enriched in basic and acidic residues. Hemopexin repeat units follow at residues 158–202 (GKPF…VWGI), 203–250 (EGPI…FDGI), and 251–305 (PDNV…FEHF). N-linked (GlcNAc...) asparagine glycosylation occurs at N169. N-linked (GlcNAc...) (complex) asparagine glycosylation is present at N242. The residue at position 282 (Y282) is a Sulfotyrosine. C293 and C430 are oxidised to a cystine. S312 is subject to Phosphoserine. Residues 362–395 (RPSLAKKQRFRHRNRKGYRSQRGHSRGRNQNSRR) form a heparin-binding region. The interval 364-398 (SLAKKQRFRHRNRKGYRSQRGHSRGRNQNSRRPSR) is disordered. The span at 365 to 388 (LAKKQRFRHRNRKGYRSQRGHSRG) shows a compositional bias: basic residues. S397 is modified (phosphoserine; by PKA). A sulfotyrosine mark is found at Y417 and Y420. The Hemopexin 4 repeat unit spans residues 419–472 (DYRMDWLVPATCEPIQSVFFFSGDKYYRVNLRTRRVDTVDPPYPRSIAQYWLGC).

In terms of assembly, exists in two forms: a single chain 75 kDa form (V75) and a clipped form composed of two chains (65 kDa and 10 kDa) (V65+V10) which are held together by a disulfide bond. Interacts with SERPINE1/PAI1, insulin and C1QBP. As to quaternary structure, (Microbial infection) Interacts (via hemopexin repeat 2) with P.falciparum (isolate CDC / Honduras) SERA5 P47 (via C-terminus); may form heterotetramers of two VTN and SERA5 P47 heterodimers; the interaction may protect merozoites from phagocytosis by host monocytes; VTN glycosylation appears to be dispensable for the interaction. In terms of processing, sulfated on tyrosine residues. N- and O-glycosylated. Post-translationally, phosphorylation on Thr-69 and Thr-76 favors cell adhesion and spreading. In terms of processing, it has been suggested that the active SMB domain may be permitted considerable disulfide bond heterogeneity or variability, thus two alternate disulfide patterns based on 3D structures are described with 1 disulfide bond conserved in both. Phosphorylation sites are present in the extracellular medium. As to expression, expressed in the retina pigment epithelium (at protein level). Expressed in plasma (at protein level). Expressed in serum (at protein level).

It is found in the secreted. The protein resides in the extracellular space. It localises to the parasitophorous vacuole. In terms of biological role, vitronectin is a cell adhesion and spreading factor found in serum and tissues. Vitronectin interact with glycosaminoglycans and proteoglycans. Is recognized by certain members of the integrin family and serves as a cell-to-substrate adhesion molecule. Inhibitor of the membrane-damaging effect of the terminal cytolytic complement pathway. Somatomedin-B is a growth hormone-dependent serum factor with protease-inhibiting activity. This Homo sapiens (Human) protein is Vitronectin (VTN).